Here is a 124-residue protein sequence, read N- to C-terminus: Holo-[acyl-carrier-protein] synthase (124 aa).

The Mg(2+) site is built by aspartate 8 and glutamate 55.

This sequence belongs to the P-Pant transferase superfamily. AcpS family. It depends on Mg(2+) as a cofactor.

The protein resides in the cytoplasm. It carries out the reaction apo-[ACP] + CoA = holo-[ACP] + adenosine 3',5'-bisphosphate + H(+). Transfers the 4'-phosphopantetheine moiety from coenzyme A to a Ser of acyl-carrier-protein. The sequence is that of Holo-[acyl-carrier-protein] synthase from Desulfovibrio desulfuricans (strain ATCC 27774 / DSM 6949 / MB).